Here is a 479-residue protein sequence, read N- to C-terminus: MNFETIIGLEVHVELNTNSKIFSPSSAHFGQEANANTNVIDWSFPGVLPVINKGVIDAGIKAALALNMDIHKKMHFDRKNYFYPDNPKAYQISQFDEPIGFNGWIDITLEDGTSKKIRIERAHLEEDAGKNTHGTDGYSYVDLNRQGVPLIEIVSEADMRSPEEAYAYLTALKEIIQYTGISDVKMEEGSMRVDANISLRPYGQKEFGTKTELKNLNSFSNVRKGLEFEVERQAKVLRSGGVIRQETRRYDEASKGTILMRVKEGAADYRYFPEPDLPLYEIDDVWIEEMRHELPQFPAQRRATYINDLGLSSYDANQLTATKAMSDFFEKAVALGGDAKQVSNWLQGEVAQYLNAEGKAIQEISLTPANLVEMIGIIADGTISSKIAKKVFVHLAKNGGSAREYVEKAGLVQISDPDVLIPIIHRVFEEQEAAVVDFKSGKRNADKAFTGFLMKATKGQANPQVAQQLLAQELQKLLD.

Belongs to the GatB/GatE family. GatB subfamily. Heterotrimer of A, B and C subunits.

The enzyme catalyses L-glutamyl-tRNA(Gln) + L-glutamine + ATP + H2O = L-glutaminyl-tRNA(Gln) + L-glutamate + ADP + phosphate + H(+). The catalysed reaction is L-aspartyl-tRNA(Asn) + L-glutamine + ATP + H2O = L-asparaginyl-tRNA(Asn) + L-glutamate + ADP + phosphate + 2 H(+). Allows the formation of correctly charged Asn-tRNA(Asn) or Gln-tRNA(Gln) through the transamidation of misacylated Asp-tRNA(Asn) or Glu-tRNA(Gln) in organisms which lack either or both of asparaginyl-tRNA or glutaminyl-tRNA synthetases. The reaction takes place in the presence of glutamine and ATP through an activated phospho-Asp-tRNA(Asn) or phospho-Glu-tRNA(Gln). The polypeptide is Aspartyl/glutamyl-tRNA(Asn/Gln) amidotransferase subunit B (Streptococcus uberis (strain ATCC BAA-854 / 0140J)).